The sequence spans 181 residues: ATP synthase subunit delta (181 aa).

This sequence belongs to the ATPase delta chain family. In terms of assembly, F-type ATPases have 2 components, F(1) - the catalytic core - and F(0) - the membrane proton channel. F(1) has five subunits: alpha(3), beta(3), gamma(1), delta(1), epsilon(1). F(0) has three main subunits: a(1), b(2) and c(10-14). The alpha and beta chains form an alternating ring which encloses part of the gamma chain. F(1) is attached to F(0) by a central stalk formed by the gamma and epsilon chains, while a peripheral stalk is formed by the delta and b chains. The F(1)F(0) complex interacts with SpoIIIJ and YqjG; YqgA is found in the same complex. Interacts with FloT.

It localises to the cell membrane. The protein resides in the membrane raft. Functionally, f(1)F(0) ATP synthase produces ATP from ADP in the presence of a proton or sodium gradient. F-type ATPases consist of two structural domains, F(1) containing the extramembraneous catalytic core and F(0) containing the membrane proton channel, linked together by a central stalk and a peripheral stalk. During catalysis, ATP synthesis in the catalytic domain of F(1) is coupled via a rotary mechanism of the central stalk subunits to proton translocation. This protein is part of the stalk that links CF(0) to CF(1). It either transmits conformational changes from CF(0) to CF(1) or is implicated in proton conduction. The chain is ATP synthase subunit delta from Bacillus subtilis (strain 168).